Here is a 349-residue protein sequence, read N- to C-terminus: Protein-glutamate methylesterase/protein-glutamine glutaminase (349 aa).

A Response regulatory domain is found at 5 to 122 (RVLSVDDSAL…REGMLAYSEM (118 aa)). Residue Asp56 is modified to 4-aspartylphosphate. In terms of domain architecture, CheB-type methylesterase spans 152 to 344 (LLSSEKLIAI…QQMLATISAG (193 aa)). Catalysis depends on residues Ser164, His190, and Asp286.

This sequence belongs to the CheB family. Post-translationally, phosphorylated by CheA. Phosphorylation of the N-terminal regulatory domain activates the methylesterase activity.

The protein localises to the cytoplasm. The catalysed reaction is [protein]-L-glutamate 5-O-methyl ester + H2O = L-glutamyl-[protein] + methanol + H(+). It catalyses the reaction L-glutaminyl-[protein] + H2O = L-glutamyl-[protein] + NH4(+). Involved in chemotaxis. Part of a chemotaxis signal transduction system that modulates chemotaxis in response to various stimuli. Catalyzes the demethylation of specific methylglutamate residues introduced into the chemoreceptors (methyl-accepting chemotaxis proteins or MCP) by CheR. Also mediates the irreversible deamidation of specific glutamine residues to glutamic acid. The polypeptide is Protein-glutamate methylesterase/protein-glutamine glutaminase (Shigella flexneri).